Reading from the N-terminus, the 341-residue chain is MEIKCSERLIIPKEYKTELDLKETAIAIKEVKDCFERALAKQLNLIRVSAPLFVRCDKGLNDNLNGVERPVKFTVKDDNEAAVEIVHSLAKWKRMALYRYNFNADEGLYTDMNAIRRDEELDNTHSIYVDQWDWERIIKKEDRNEEYLKDIVRKIFKAFKETEEHINKLYPFLGEVLPEEVFFMTTQELEDMFPDLTAKEREDAITKEKKAVFLMKIGKTLESGEKHDGRAPDYDDWELNGDILFWNPVLNKAFELSSMGIRVDEESLLKQLKLANCEERKELQFHKMLLEKKLPYTIGGGIGQSRMCMLFLKKAHIGEVQSSIWPEEMIKFCEEKGMTIL.

Belongs to the class-II aminoacyl-tRNA synthetase family. AsnA subfamily.

The protein localises to the cytoplasm. The enzyme catalyses L-aspartate + NH4(+) + ATP = L-asparagine + AMP + diphosphate + H(+). It functions in the pathway amino-acid biosynthesis; L-asparagine biosynthesis; L-asparagine from L-aspartate (ammonia route): step 1/1. The sequence is that of Aspartate--ammonia ligase from Clostridium tetani (strain Massachusetts / E88).